The following is a 135-amino-acid chain: VapC ribonuclease aq_1901 (135 aa).

A PINc domain is found at 3–130; that stretch reads LLDTTVLLDF…FKKLGFKTVN (128 aa). Asp-5 lines the Mg(2+) pocket.

It belongs to the PINc/VapC protein family. Mg(2+) is required as a cofactor.

In terms of biological role, toxic component of a type II toxin-antitoxin (TA) system. An RNase. This Aquifex aeolicus (strain VF5) protein is VapC ribonuclease aq_1901.